The primary structure comprises 96 residues: Auxin-responsive protein SAUR29 (96 aa).

Belongs to the ARG7 family.

The protein localises to the cell membrane. In terms of biological role, functions as a positive effector of cell expansion through modulation of auxin transport. Involved in thermo-responsiveness of plant architecture. Enhances plasma membrane H(+)-ATPase. The polypeptide is Auxin-responsive protein SAUR29 (Arabidopsis thaliana (Mouse-ear cress)).